A 198-amino-acid polypeptide reads, in one-letter code: Probable GTP-binding protein EngB (198 aa).

In terms of domain architecture, EngB-type G spans 36–198; the sequence is SEPQFAFIGR…NLSKLQELLE (163 aa). GTP is bound by residues 44 to 51, 70 to 74, 88 to 91, 155 to 158, and 182 to 184; these read GRSNVGKS, GRTQL, DLPG, NKID, and ISA. Positions 51 and 72 each coordinate Mg(2+).

It belongs to the TRAFAC class TrmE-Era-EngA-EngB-Septin-like GTPase superfamily. EngB GTPase family. Mg(2+) is required as a cofactor.

Functionally, necessary for normal cell division and for the maintenance of normal septation. The protein is Probable GTP-binding protein EngB of Mesomycoplasma hyopneumoniae (strain 232) (Mycoplasma hyopneumoniae).